The sequence spans 387 residues: Large ribosomal subunit protein uL3 (387 aa).

This sequence belongs to the universal ribosomal protein uL3 family.

The protein localises to the cytoplasm. This is Large ribosomal subunit protein uL3 (RPL3) from Eremothecium gossypii (strain ATCC 10895 / CBS 109.51 / FGSC 9923 / NRRL Y-1056) (Yeast).